The following is a 421-amino-acid chain: Enolase (421 aa).

Q165 provides a ligand contact to (2R)-2-phosphoglycerate. E207 acts as the Proton donor in catalysis. The Mg(2+) site is built by D244, E285, and D312. Residues K337, R366, S367, and K388 each coordinate (2R)-2-phosphoglycerate. The Proton acceptor role is filled by K337.

It belongs to the enolase family. The cofactor is Mg(2+).

It localises to the cytoplasm. The protein resides in the secreted. The protein localises to the cell surface. It carries out the reaction (2R)-2-phosphoglycerate = phosphoenolpyruvate + H2O. The protein operates within carbohydrate degradation; glycolysis; pyruvate from D-glyceraldehyde 3-phosphate: step 4/5. Functionally, catalyzes the reversible conversion of 2-phosphoglycerate (2-PG) into phosphoenolpyruvate (PEP). It is essential for the degradation of carbohydrates via glycolysis. The sequence is that of Enolase from Ehrlichia chaffeensis (strain ATCC CRL-10679 / Arkansas).